The chain runs to 962 residues: Phenylalanine--tRNA ligase beta subunit (962 aa).

A tRNA-binding domain is found at 85-201 (TIRWCKVRVC…AEVFQGDELS (117 aa)). One can recognise a B5 domain in the interval 456–538 (TQQSPILLST…RVIGFNRIPS (83 aa)). Residues Asp516, Asp522, Glu525, and Glu526 each coordinate Mg(2+). An insert region spans residues 621-675 (PDSTHNPDSGSDPIIPTGVTRITEPGSSGVSGPGNVGVKEKCSADTSIEHAPTTR). Residues 870 to 961 (PTSPAATQHL…ASSKFGAIMR (92 aa)) form the FDX-ACB domain.

It belongs to the phenylalanyl-tRNA synthetase beta subunit family. Type 1 subfamily. In terms of assembly, tetramer of two alpha and two beta subunits. Mg(2+) is required as a cofactor.

It localises to the cytoplasm. It carries out the reaction tRNA(Phe) + L-phenylalanine + ATP = L-phenylalanyl-tRNA(Phe) + AMP + diphosphate + H(+). In Tropheryma whipplei (strain Twist) (Whipple's bacillus), this protein is Phenylalanine--tRNA ligase beta subunit.